Here is a 1250-residue protein sequence, read N- to C-terminus: MRRGGWRKRAENDGWETWGGYMAAKVQKLEEQFRSDAAMQKDGTSSTIFSGVAIYVNGYTDPSAEELRKLMMLHGGQYHVYYSRSKTTHIIATNLPNAKIKELKGEKVIRPEWIVESIKAGRLLSYIPYQLYTKQSSVQKGLSFNPICRPEDPLPGPSNIAKQLNNRVNHIVKKIETENEVKVNGMNSWNEEDENNDFSFVDLEQTSPGRKQNGIPHPRGSTAIFNGHTPSSNGALKTQDCLVPMVNSVASRLSPASSQEEDKAEKSSTDFRDCTLQQLQQSTRNTDALRNPHRTNSFSLSPLHSNTKINGAHHSTVQGPSSTKSTSSVSTFSKAAPSVPSKPSDCNFISNFYSHSRLHHISMWKCELTEFVNTLQRQSNGIFPGREKLKKMKTGRSALVVTDTGDMSLLNSPRHQSCIMHVDMDCFFVSVGIRNRPDLKGKPVAVTSNRGTGRAPLRPGANPQLEWQYYQNKILKGKADIPDSSLWENPDSAQADGSDSVLSRAEIASCSYEARQLGIKNGMFFGHAKQLCPNLQAVPYDFHAYKEVARTLYETLASYTHNIEAVSCDEALVDITEILAETKLTPDEFANAVRMEIKDQTKCTASVGIGSNILLARMATRKAKPDGQYHLKPEEVDDFIRGQLVTNLPGVGHSMESKLASLGIKTCGDLQYMTMAKLQKEFGPKTGQMLYRFCRGLDDRPVRTEKERKSVSAEINYGIRFTQPKEAEAFLLSLSEEIQRRLEATGMKGKRLTLKIMVRKPGAPVETAKFGGHGICDNIARTVTLDQATDNAKIIGKAMLNMFHTMKLNISDMRGVGIHVNQLVPTNLNPSTCPSRPSVQSSHFPGGSYSVRDVFQVQKAKKSTEEEHKEVFRAAVDLEISPVSRTCTFLPPFPAHLPTSPDTNKAESSGKWNGLHSPVSVQSRLNLSIEVPSPSQLDQSVLEALLPDLREQVEQVCAVQQAESHGDKKKEPVNGCNTGILPQPVGTVLLQIPEPQESNSDTGINVIALPAFSQVDPEVFAALPAELQRELKAAYDQRQRQDENSTHQQSASASVPKNPLLHLKAAVKEKKRNKKKKTIGSPKRIQSPLKNRLLNSPAKTLPGACGSPQKLIDGFLKHEGPPAEKPLEELSASTSGVPGLSSLQSDPAGCVRPPAPNLAGAVEFNDVKTLLREWITTISDPMEEDILQVVKYCTDLIEEKDLEKLDLVIKYMKRLMQQSVESVWNMAFDFILDNVQVVLQQTYGSTLKVT.

Residues 44-131 enclose the BRCT domain; it reads TSSTIFSGVA…RLLSYIPYQL (88 aa). 2 disordered regions span residues 204–236 and 252–329; these read EQTS…NGAL and RLSP…TSSV. Residues 260–273 show a composition bias toward basic and acidic residues; that stretch reads EEDKAEKSSTDFRD. The span at 275-320 shows a compositional bias: polar residues; it reads TLQQLQQSTRNTDALRNPHRTNSFSLSPLHSNTKINGAHHSTVQGP. The interval 352–362 is interaction with target DNA; sequence FYSHSRLHHIS. Residues arginine 357, 423 to 427, 509 to 515, asparagine 521, and aspartate 569 contribute to the dCTP site; these read DMDCF and SCSYEAR. The UmuC domain maps to 419–652; that stretch reads IMHVDMDCFF…QLVTNLPGVG (234 aa). Residue aspartate 423 coordinates Mg(2+). Positions 569 and 570 each coordinate Mg(2+). Interaction with target DNA stretches follow at residues 652-655 and 708-716; these read GHSM and RKSVSAEIN. The segment covering 1034–1045 has biased composition (basic and acidic residues); that stretch reads AYDQRQRQDENS. Disordered stretches follow at residues 1034-1101 and 1117-1146; these read AYDQ…AKTL and KHEG…LQSD. The segment covering 1046 to 1055 has biased composition (polar residues); it reads THQQSASASV. A compositionally biased stretch (basic residues) spans 1069–1078; it reads EKKRNKKKKT. Residues 1071–1077 carry the Nuclear localization signal motif; the sequence is KRNKKKK. Over residues 1117-1128 the composition is skewed to basic and acidic residues; sequence KHEGPPAEKPLE. The segment covering 1131–1145 has biased composition (polar residues); sequence SASTSGVPGLSSLQS. Positions 1151–1250 are protein interaction domain; mediates interaction with DNA polymerase zeta; the sequence is VRPPAPNLAG…QTYGSTLKVT (100 aa).

It belongs to the DNA polymerase type-Y family. Monomer. Interacts with the DNA polymerase zeta which is composed of REV3L and MAD2L2; the interaction with MAD2L2 is direct and requires that REV3L is in its closed conformation. Interacts with POLH, POLI and POLK. Interacts with FAAP20.

The protein localises to the nucleus. Its function is as follows. Deoxycytidyl transferase involved in DNA repair. Transfers a dCMP residue from dCTP to the 3'-end of a DNA primer in a template-dependent reaction. May assist in the first step in the bypass of abasic lesions by the insertion of a nucleotide opposite the lesion. Required for normal induction of mutations by physical and chemical agents. The protein is DNA repair protein REV1 (REV1) of Pongo abelii (Sumatran orangutan).